Here is a 217-residue protein sequence, read N- to C-terminus: Somatotropin (217 aa).

Residues 1–26 form the signal peptide; the sequence is MAPGSWFSPLFIAVITLGLQWPKEAA. Histidine 46 serves as a coordination point for Zn(2+). Cysteine 79 and cysteine 190 are joined by a disulfide. Glutamate 199 contacts Zn(2+). An intrachain disulfide couples cysteine 207 to cysteine 215.

The protein belongs to the somatotropin/prolactin family.

It is found in the secreted. In terms of biological role, growth hormone plays an important role in growth control. This Struthio camelus (Common ostrich) protein is Somatotropin (GH).